The sequence spans 939 residues: Phosphoenolpyruvate carboxylase (939 aa).

Catalysis depends on residues H151 and K593.

This sequence belongs to the PEPCase type 1 family. Mg(2+) is required as a cofactor.

The catalysed reaction is oxaloacetate + phosphate = phosphoenolpyruvate + hydrogencarbonate. In terms of biological role, forms oxaloacetate, a four-carbon dicarboxylic acid source for the tricarboxylic acid cycle. This Gloeobacter violaceus (strain ATCC 29082 / PCC 7421) protein is Phosphoenolpyruvate carboxylase.